The chain runs to 380 residues: Carbamoyl phosphate synthase small chain (380 aa).

The segment at 1 to 184 (MTTSTRGAHR…EAYVVPAIGE (184 aa)) is CPSase. Ser-55, Gly-236, and Gly-238 together coordinate L-glutamine. Positions 188 to 380 (TVAAVDLGIK…FVNLMEGQRA (193 aa)) constitute a Glutamine amidotransferase type-1 domain. Cys-264 acts as the Nucleophile in catalysis. The L-glutamine site is built by Phe-265, Gln-268, Asn-306, Gly-308, and Phe-309. Active-site residues include His-354 and Glu-356.

Belongs to the CarA family. Composed of two chains; the small (or glutamine) chain promotes the hydrolysis of glutamine to ammonia, which is used by the large (or ammonia) chain to synthesize carbamoyl phosphate. Tetramer of heterodimers (alpha,beta)4.

The catalysed reaction is hydrogencarbonate + L-glutamine + 2 ATP + H2O = carbamoyl phosphate + L-glutamate + 2 ADP + phosphate + 2 H(+). It carries out the reaction L-glutamine + H2O = L-glutamate + NH4(+). It functions in the pathway amino-acid biosynthesis; L-arginine biosynthesis; carbamoyl phosphate from bicarbonate: step 1/1. Its pathway is pyrimidine metabolism; UMP biosynthesis via de novo pathway; (S)-dihydroorotate from bicarbonate: step 1/3. Functionally, small subunit of the glutamine-dependent carbamoyl phosphate synthetase (CPSase). CPSase catalyzes the formation of carbamoyl phosphate from the ammonia moiety of glutamine, carbonate, and phosphate donated by ATP, constituting the first step of 2 biosynthetic pathways, one leading to arginine and/or urea and the other to pyrimidine nucleotides. The small subunit (glutamine amidotransferase) binds and cleaves glutamine to supply the large subunit with the substrate ammonia. This is Carbamoyl phosphate synthase small chain from Streptomyces coelicolor (strain ATCC BAA-471 / A3(2) / M145).